A 309-amino-acid polypeptide reads, in one-letter code: MGNVWSLTSQMFPPKPKWTVDDMPDLTGKVVIVTGGNTGCGKESVRVLLLHGAKVYLAARSEGKAKEAIEDLKKETGHEAIFLPLDLADLVSVRRGAEEFLSKEKQLHILFNNAGVMLSPMEMLTKQGYDLQFGTNVIGHFHFTKLVLPALLAAATPTEKARVITTSSSANYMGTLNFDLWADGPARNKKAPGDMYVQSKHGNVVFAVELARRYGAQNIISHSLNPGSIRTDLQRHLSPFANKMQDIFLFPVSMGALTQLWAGTSPEAGQMNGEFMIPWARLGKARKETGDPEVGKKLWEWLEAQCKDY.

Residues Lys64, Asp86, Asn113, and Lys145 each contribute to the NADP(+) site. The Proton donor role is filled by Ser167. NADP(+)-binding residues include Tyr196 and Lys200. The active-site Proton acceptor is Tyr196. Residue Lys200 is the Lowers pKa of active site Tyr of the active site.

The protein belongs to the short-chain dehydrogenases/reductases (SDR) family.

Its pathway is secondary metabolite biosynthesis. Its function is as follows. Short-chain dehydrogenase/reductase, part of the gene cluster that mediates the biosynthesis of melleolides, a range of antifungal and phytotoxic polyketide derivatives composed of an orsellinic acid (OA) moiety esterified to various sesquiterpene alcohols. The first step in melleolides biosynthesis is performed by the delta(6)-protoilludene synthase PRO1 which catalyzes the cyclization of farnesyl diphosphate to protoilludene. The orsellinic acid synthase armB produces OA by condensing acetyl-CoA with 3 malonyl-CoA units in a three-round chain elongation reaction folowed by a C2-C7 ring closure. ArmB further catalyzes the trans-esterification of OA to the various sesquiterpene alcohols resulting from the hydroxylation of protoilludene. The melleolides cluster also includes 5 cytochrome P450 monooxygenases, 4 NAD(+)-dependent oxidoreductases, one flavin-dependent oxidoreductase, and one O-methyltransferase. The cytochrome P450 monooxygenases may be involved in protoilludene hydroxylation to elaborate melleolides with multiple alcohol groups, such as melleolide D, which carries alcohol functionalities at C-4, C-5, C-10, and C-13. The role of the NAD(+)-dependent enzymes remains unknown. Numerous melleolides, including arnamial, show 5'-O-methylation of the aromatic moiety which may be catalyzed by the methyltransferase encoded in the cluster. The flavin-dependent oxidoreductase might represent the dehydrogenase yielding the aldehyde in position 1 of arnamial and other melleolides. Finally, several halogenase localized outside of the cluster, are able to catalyze the transfer of a single chlorine atom to the melleolide backbone, resulting in a 6'-chloromelleolide product. In Armillaria gallica (Bulbous honey fungus), this protein is Short-chain dehydrogenase/reductase ARMGADRAFT_1048226.